The primary structure comprises 167 residues: Peptidoglycan-binding-like protein (167 aa).

The N-terminal stretch at 1–24 (MRSPKVKFLTIFTLSILITKMSFA) is a signal peptide.

This sequence belongs to the IagB/IpgF/P19 family.

The protein localises to the periplasm. This is Peptidoglycan-binding-like protein (pbl) from Escherichia coli O157:H7.